We begin with the raw amino-acid sequence, 226 residues long: N-acetylmuramic acid 6-phosphate phosphatase (226 aa).

Catalysis depends on Asp-12, which acts as the Nucleophile. Mg(2+) is bound by residues Asp-12, Asp-14, and Asp-171. Asp-14 serves as the catalytic Proton donor.

This sequence belongs to the HAD-like hydrolase superfamily. CbbY/CbbZ/Gph/YieH family. Phosphatase MupP subfamily. It depends on Mg(2+) as a cofactor.

It catalyses the reaction N-acetyl-D-muramate 6-phosphate + H2O = N-acetyl-D-muramate + phosphate. It functions in the pathway cell wall biogenesis; peptidoglycan recycling. Functionally, specifically catalyzes the dephosphorylation of N-acetylmuramate 6-phosphate (MurNAc-6P) to MurNac. Is involved in peptidoglycan recycling as part of a cell wall recycling pathway that bypasses de novo biosynthesis of the peptidoglycan precursor UDP-MurNAc. Plays a role in intrinsic resistance to fosfomycin, which targets the de novo synthesis of UDP-MurNAc. The chain is N-acetylmuramic acid 6-phosphate phosphatase from Pseudomonas aeruginosa (strain ATCC 15692 / DSM 22644 / CIP 104116 / JCM 14847 / LMG 12228 / 1C / PRS 101 / PAO1).